The primary structure comprises 417 residues: MLEQMGIAAKQASYKLAQLSSREKNRVLEKIADELEAQSEIILNANAQDVADARANGLSEAMLDRLALTPARLKGIADDVRQVCNLADPVGQVIDGGVLDSGLRLERRRVPLGVIGVIYEARPNVTVDVASLCLKTGNAVILRGGKETCRTNAATVAVIQDALKSCGLPAGAVQAIDNPDRALVSEMLRMDKYIDMLIPRGGAGLHKLCREQSTIPVITGGIGVCHIYVDESAEIAEALKVIVNAKTQRPSTCNTVETLLVNKNIADSFLPALSKQMAESGVTLHADAAALTQLQAGPAKVVAVKAEEYDDEFLSLDLNVKIVSDLDDAIAHIREHGTQHSDAILTRDMRNAQRFVNEVDSSAVYVNASTRFTDGGQFGLGAEVAVSTQKLHARGPMGLEALTTYKWIGIGDYTIRA.

This sequence belongs to the gamma-glutamyl phosphate reductase family.

Its subcellular location is the cytoplasm. The catalysed reaction is L-glutamate 5-semialdehyde + phosphate + NADP(+) = L-glutamyl 5-phosphate + NADPH + H(+). The protein operates within amino-acid biosynthesis; L-proline biosynthesis; L-glutamate 5-semialdehyde from L-glutamate: step 2/2. Its function is as follows. Catalyzes the NADPH-dependent reduction of L-glutamate 5-phosphate into L-glutamate 5-semialdehyde and phosphate. The product spontaneously undergoes cyclization to form 1-pyrroline-5-carboxylate. This Shigella flexneri serotype 5b (strain 8401) protein is Gamma-glutamyl phosphate reductase.